The following is a 146-amino-acid chain: 2S sulfur-rich seed storage protein 1 (146 aa).

An N-terminal signal peptide occupies residues 1 to 22 (MAKISVAAAALLVLMALGHATA). The propeptide occupies 23 to 36 (FRATVTTTVVEEEN). Gln-37 carries the post-translational modification Pyrrolidone carboxylic acid. 4 cysteine pairs are disulfide-bonded: Cys-40–Cys-92, Cys-53–Cys-81, Cys-82–Cys-130, and Cys-94–Cys-137. A propeptide spanning residues 65-69 (PYQTM) is cleaved from the precursor. The propeptide occupies 143 to 146 (IAGF).

This sequence belongs to the 2S seed storage albumins family. In terms of assembly, the mature protein consists of a small and a large chain linked by disulfide bonds.

In terms of biological role, this is a 2S seed storage protein. The chain is 2S sulfur-rich seed storage protein 1 (BE2S1) from Bertholletia excelsa (Brazil nut).